The following is a 151-amino-acid chain: Large ribosomal subunit protein bL9 (151 aa).

This sequence belongs to the bacterial ribosomal protein bL9 family.

Binds to the 23S rRNA. The sequence is that of Large ribosomal subunit protein bL9 from Chlorobium luteolum (strain DSM 273 / BCRC 81028 / 2530) (Pelodictyon luteolum).